We begin with the raw amino-acid sequence, 287 residues long: ATP synthase gamma chain (287 aa).

Belongs to the ATPase gamma chain family. In terms of assembly, F-type ATPases have 2 components, CF(1) - the catalytic core - and CF(0) - the membrane proton channel. CF(1) has five subunits: alpha(3), beta(3), gamma(1), delta(1), epsilon(1). CF(0) has three main subunits: a, b and c.

It is found in the cell inner membrane. Produces ATP from ADP in the presence of a proton gradient across the membrane. The gamma chain is believed to be important in regulating ATPase activity and the flow of protons through the CF(0) complex. This chain is ATP synthase gamma chain, found in Geotalea uraniireducens (strain Rf4) (Geobacter uraniireducens).